A 121-amino-acid polypeptide reads, in one-letter code: General odorant-binding protein 72 (121 aa).

2 disulfides stabilise this stretch: Cys-45/Cys-101 and Cys-90/Cys-110.

The protein belongs to the PBP/GOBP family.

It localises to the secreted. Functionally, present in the aqueous fluid surrounding olfactory sensory dendrites and are thought to aid in the capture and transport of hydrophobic odorants into and through this fluid. This Anopheles gambiae (African malaria mosquito) protein is General odorant-binding protein 72 (Obp72).